Consider the following 317-residue polypeptide: Olfactory receptor 5K16 (317 aa).

Residues 1 to 28 (MEKTNHSLTTQFILVGFSDHPDLKTPLF) are Extracellular-facing. Asparagine 5 is a glycosylation site (N-linked (GlcNAc...) asparagine). Residues 29-49 (LLFSVIYLVTMVGNLGLVAVI) form a helical membrane-spanning segment. At 50 to 56 (YLEPRLH) the chain is on the cytoplasmic side. A helical transmembrane segment spans residues 57–77 (TPMYIFLGNLALMDSCCSCAI). The Extracellular segment spans residues 78-93 (TPKILENFFSVDRRIS). Residues 94 to 114 (LYECMAQFYFLCLAETADCFL) form a helical membrane-spanning segment. Residues cysteine 97 and cysteine 189 are joined by a disulfide bond. Residues 115 to 144 (LAAMAYDRYVAICNPLQYHSMMSKKLSIQM) lie on the Cytoplasmic side of the membrane. The chain crosses the membrane as a helical span at residues 145–165 (SIGTFITSNLHSLIHVGCLLR). The Extracellular segment spans residues 166-198 (LTFCKSNRIDHFFCDILPLYRLSCTDPFINELM). Residues 199–219 (IYIFSMPIQVFTITTVLVSYF) traverse the membrane as a helical segment. Residues 220–239 (CILLTIFKMKSKDGRGKAFS) lie on the Cytoplasmic side of the membrane. A helical transmembrane segment spans residues 240–259 (TCASHFFSVSIFYVCLLMYI). Residues 260 to 268 (RPFDEGNKD) lie on the Extracellular side of the membrane. A helical transmembrane segment spans residues 269–289 (IPVAVFYTIIIPLLNPFIYSL). The Cytoplasmic segment spans residues 290–317 (RNKEVVNAVKKVMKTHSIFKNASASMAR).

This sequence belongs to the G-protein coupled receptor 1 family.

The protein localises to the cell membrane. Its function is as follows. Potential odorant receptor. This chain is Olfactory receptor 5K16, found in Mus musculus (Mouse).